Consider the following 89-residue polypeptide: Small ribosomal subunit protein uS15 (89 aa).

This sequence belongs to the universal ribosomal protein uS15 family. Part of the 30S ribosomal subunit. Forms a bridge to the 50S subunit in the 70S ribosome, contacting the 23S rRNA.

In terms of biological role, one of the primary rRNA binding proteins, it binds directly to 16S rRNA where it helps nucleate assembly of the platform of the 30S subunit by binding and bridging several RNA helices of the 16S rRNA. Its function is as follows. Forms an intersubunit bridge (bridge B4) with the 23S rRNA of the 50S subunit in the ribosome. The sequence is that of Small ribosomal subunit protein uS15 from Limosilactobacillus fermentum (strain NBRC 3956 / LMG 18251) (Lactobacillus fermentum).